The chain runs to 891 residues: Protein SEY1 homolog (891 aa).

Residues 1–754 lie on the Cytoplasmic side of the membrane; that stretch reads MNLHLVDSDG…LRAAEAGNQR (754 aa). The region spanning 52-318 is the GB1/RHD3-type G domain; the sequence is GLNYHVVGVF…RCSDYLFSYH (267 aa). 62-69 provides a ligand contact to GTP; it reads GGQSSGKS. Residues 755–775 form a helical membrane-spanning segment; it reads LPAWVIPALFILGWNELLYVL. Over 776-778 the chain is Lumenal; that stretch reads TSP. A helical transmembrane segment spans residues 779 to 799; the sequence is ALLVLVVVICAVFFRQFFVSQ. The Cytoplasmic segment spans residues 800-891; that stretch reads WHAFEETGPA…MRHRTTHKLD (92 aa). A compositionally biased stretch (polar residues) spans 863 to 880; the sequence is STHADPAPSNTTVPTAQA. The interval 863 to 891 is disordered; that stretch reads STHADPAPSNTTVPTAQATMRHRTTHKLD. Positions 882–891 are enriched in basic residues; sequence MRHRTTHKLD.

Belongs to the TRAFAC class dynamin-like GTPase superfamily. GB1/RHD3 GTPase family. RHD3 subfamily.

The protein localises to the endoplasmic reticulum membrane. Its function is as follows. Probable GTP-binding protein that may be involved in cell development. The protein is Protein SEY1 homolog of Leishmania braziliensis.